Reading from the N-terminus, the 260-residue chain is MTSLKLLKEKAPLVICITNDVVKNFTANGLVALGASPAMSEFPADLEDLLKYAGGLLINIGTLTDENWKLYQAALKIAEKYNVPAVLDPVACGAGEYRKKVADDLINNYKLAAIRGNAGEIASLVGIDVASKGVDSAGVDNIDEIALAANEKFNIPIVVTGEVDAIAVNGEVVTIHNGSAMMPKVIGTGCLLGAVVASFIGLEKGQELKSLETAMLVYNIAGEIAEKRPNGHLPGTFKAEFINALYEITDEDVKEFKRVK.

Residue M39 coordinates substrate. R115 and T160 together coordinate ATP. G187 serves as a coordination point for substrate.

It belongs to the Thz kinase family. Mg(2+) is required as a cofactor.

It carries out the reaction 5-(2-hydroxyethyl)-4-methylthiazole + ATP = 4-methyl-5-(2-phosphooxyethyl)-thiazole + ADP + H(+). Its pathway is cofactor biosynthesis; thiamine diphosphate biosynthesis; 4-methyl-5-(2-phosphoethyl)-thiazole from 5-(2-hydroxyethyl)-4-methylthiazole: step 1/1. Catalyzes the phosphorylation of the hydroxyl group of 4-methyl-5-beta-hydroxyethylthiazole (THZ). This Streptococcus pneumoniae (strain Taiwan19F-14) protein is Hydroxyethylthiazole kinase 1.